Consider the following 201-residue polypeptide: CASP-like protein 1E1 (201 aa).

Over 1-36 the chain is Cytoplasmic; that stretch reads MESQFRPGFDVSQGAGGRASKFGDVVAPTSSTQLPG. The chain crosses the membrane as a helical span at residues 37-57; sequence IILRIVAIVLTFISAVVMGAA. Topologically, residues 58-87 are extracellular; the sequence is RQTTTVTGIDAETALLTSITVTVKSTYSAA. The chain crosses the membrane as a helical span at residues 88-108; the sequence is YVYFVVANVLVFFYSVVSLVL. Residues 109–127 are Cytoplasmic-facing; it reads SMVNKARLTSMSLPFSIAD. The helical transmembrane segment at 128 to 148 threads the bilayer; sequence LLMVVLLFSSNGAAAAISVVA. Residues 149–173 lie on the Extracellular side of the membrane; sequence EKGQQNLAGWDKICNLFGGLCARVN. A helical transmembrane segment spans residues 174–194; it reads AAIVLSMLASVAYVILVVFGM. At 195-201 the chain is on the cytoplasmic side; that stretch reads ANLRRSQ.

It belongs to the Casparian strip membrane proteins (CASP) family. Homodimer and heterodimers.

Its subcellular location is the cell membrane. This Musa acuminata (Banana) protein is CASP-like protein 1E1.